The following is a 321-amino-acid chain: MSEYLVTGGTGFIASYIIKSLLELGHTVRTTVRNPRDEEKVGFLWEFQGAKQRLKILQADLTVEGSFDEAVNGVDGVFHTASPVLVPQDHNIQETLVDPIIKGTTNVMSSCAKSKATLKRIVLTSSCSSIRYRFDATEASPLNESHWSDPEYCKRFNLWYGYAKTLGEREAWRIAEEKGLDLVVVNPSFVVGPLLGPKPTSTLLMILAIAKGLAGEYPNFTVGFVHIDDVVAAHVLAMEEPKASGRIICSSSVAHWSEIIELMRNKYPNYPFENKCSNKEGDNSPHSMDTRKIHELGFGSFKSLPEMFDDCIISFQKKGLL.

N-acetylserine is present on serine 2. Residues 4-28 (YLVTGGTGFIASYIIKSLLELGHTV), lysine 40, and tyrosine 160 each bind NADP(+).

This sequence belongs to the NAD(P)-dependent epimerase/dehydratase family. Dihydroflavonol-4-reductase subfamily.

It localises to the cytoplasm. Functionally, may be involved in the biosynthesis of hydroxylated tetraketide compounds that serve as sporopollenin precursors (the main constituents of exine). Acts on tetraketide alpha-pyrones and reduces the carbonyl function on the tetraketide alkyl chain to a secondary alcohol function. The chain is Tetraketide alpha-pyrone reductase 2 (TKPR2) from Arabidopsis thaliana (Mouse-ear cress).